The chain runs to 134 residues: Large ribosomal subunit protein bL20 (134 aa).

It belongs to the bacterial ribosomal protein bL20 family.

Functionally, binds directly to 23S ribosomal RNA and is necessary for the in vitro assembly process of the 50S ribosomal subunit. It is not involved in the protein synthesizing functions of that subunit. This is Large ribosomal subunit protein bL20 from Rhizobium etli (strain ATCC 51251 / DSM 11541 / JCM 21823 / NBRC 15573 / CFN 42).